The primary structure comprises 2155 residues: MQPHRVFIFGDQTGGFATGLQQLLLDKTNPSLVYFVDHANLALRQELSRLPSTDREALPLIGSVQDILTLHKKGERNVVIDSILSTVYHLACFIYKYGNAGCAYPNGQDIHVTGMCVGSLAAAAVSCSRSIGDVIVAGIVAIRAALRVGLRAHQAALLISNRAAPHTHWSYAVSTESLRLDLIKDALEEFAQDMDTSPLSHPYISAIGLDSVTVSGPPSQLQQFWRENTTFHKPIPIPIWAPYHGPHIFGDSDVETIIESLHPIPKLSQQAPIISSGSGVMASQTLADLIRAALRDILLHRLDLPALVGHIKDIVRSSPNQDFSMTPIATNAATGLVAATAKAAGNKGSVDNEIMDAAALAGSASRATSAKTHDSKIAIIGMSGRFPEAADLDSFWSLLEQGVDAYRPVPPDRFDAHAHHDETGRRKNTSKVLGGCWINQPGLFDPKFFSISPKEAEQSDPAQRLALQTAYEALEMAGVVPDRTQSTQRDRVGVFYGMVSDDWREINSGQNIDTYFIPGGIRAFTPGRINYHFKFSGPSITVDTACSSSLAAIHVACNSLWRGDCDTAVAGGVNVLTNPDIFAGLDRGHFLSTTGNCKTFDDDADGYCRADGVGTVILKRLEDAVMDKDPILAILNSAYTNHSAEAVSITRPHAGAQELIFSKLLRETGIHPHDVSYIEMHGTGTQAGDATEMSSVLRTFAPDTRRLSSQTLHLGSAKSNVGHGEAASGVTSLIKVLLMMKHNTIPPHCGIKGRINHRFPTDLRERNVFIASQPVAWNKPHTGSGKRRVFINNFSAAGGNSALLLEDAPAGENPETKDPRSTHVVAVSAKSSTSLANNLKRLRDFVQDNIHDLDSLSKLSYTTTARRIHYPFRTAVTASSRDQLLQGIESVLLRDEMPKPCKSQKNIGFVFSGQGAQYAGMGRHLFQNNHTFRTQILACNQICLSQGFPSILEIFKQDVDMNSLEPLLVQLATTCLQMSLVSFWKSLGVTPDFCIGHSLGEYAALQAAGVLSVSDTIYLTGIRARMLQEKCSAGSHAMLAVRAPLARVNALLDPAIHEVTCLNGPQDVVIGGRVADVEALEKELAKQDIKAVKVSVPFAFHSTQVEPILGEFCDAARGVPFQTQTIPVVSTLLGEVVQPEAAGVFGPGYLKRHCREPVNFAAAVQAARDANVIHAGTVFVEIGPHPVCLALLKSNMGPDAVTLASLHRKDDGWKVLADTLAALYQSGLKINWDEVHRDFASCQEVLPLPSYSWDNKNYWIQYVHNWTLTKGDEPAAMAETTALQAQDGLTSSVQRIIRQTDGPGSLVTIVVQSDFGSARLADVAQGHKVNGEMLCTSSLYAEIGMTLGRHLLEKYRPDLDGYSTEIKDMSVDKPLILKDENKQTLFRAEVVHDKTTHTATMSIYSVDSAGNKTVDHARCLLRFADPTSWLDEWERTYYLIDRSVRWLEERAEQGTDSLLSKGIVYKLFSSLVDYSPSFKGLQEVILNSGDREAAAKVRLQAEKGDFDCNPMWIDSFGQLTGFLMNGHDFTGKDEVFINHGWRSMRCAKPFRKDAVYRTYIRMQHVEKTKYRGDLYIIEDGVIVAVFGGMTFLGMSRSLLNKVLPPRRGAEAINTPHPVAAAQQGMAASAKDTERRPLDIPTRAQRQPSSPQTGTMGRILAILSKEVGLSMETLTDDLVFTDYGVDSLLSLTITGRIREELGLDMDSSIFTHYSTLGELKAFLGADQPDDAVACESSIGQHTPQTSDKGSGTLASQKTDGDTGPDTTLNRVCAIIAEEVGISVQELSSSQDFQELGIDSLSSLTILSRVREELQLDLESDFFDTHPSFYALQKALCGSEASNGAPEANETTPSSDRLESDLRSITWQSGQNIVASPPHATSILVSGSPSTARMILVLFPDGSGSAASYGALAPKIRRDIAVYALNCPWRTNGEEILRLGVTLDQMVAKHLVEVGRILDSHQRGRPGSSNASVGLALGGWSAGGILALEAVRQLREAGVAVQKMVLLDAPNPIGLQNPPPRMFHFLDELGILGAGKGKAPAWVLRHFDAMVTLLKSYRPRRLGAEDAPKCLIVYAKDGICKDPNGPRMDTKPDDAREMLWLLYNRVDFSAEGWKTLVGPQNLAVGVVEDVNHFSMMNPGPKMVEMGNLIGDFLLGPS.

The N-terminal acylcarrier protein transacylase domain (SAT) stretch occupies residues 7 to 244; the sequence is FIFGDQTGGF…IPIPIWAPYH (238 aa). The region spanning 374-807 is the Ketosynthase family 3 (KS3) domain; the sequence is DSKIAIIGMS…GGNSALLLED (434 aa). Catalysis depends on for beta-ketoacyl synthase activity residues cysteine 546, histidine 681, and histidine 723. A malonyl-CoA:ACP transacylase (MAT) domain region spans residues 908-1213; it reads GFVFSGQGAQ…ASLHRKDDGW (306 aa). Serine 998 serves as the catalytic For acyl/malonyl transferase activity. Residues 1290–1605 are product template (PT) domain; the sequence is TSSVQRIIRQ…RSLLNKVLPP (316 aa). Residues 1294–1428 form an N-terminal hotdog fold region; it reads QRIIRQTDGP…CLLRFADPTS (135 aa). Residues 1294-1600 enclose the PKS/mFAS DH domain; it reads QRIIRQTDGP…FLGMSRSLLN (307 aa). The active-site Proton acceptor; for dehydratase activity is the histidine 1327. The interval 1455-1600 is C-terminal hotdog fold; it reads TDSLLSKGIV…FLGMSRSLLN (146 aa). Aspartate 1514 acts as the Proton donor; for dehydratase activity in catalysis. Residues 1626 to 1654 form a disordered region; that stretch reads AASAKDTERRPLDIPTRAQRQPSSPQTGT. Polar residues predominate over residues 1643–1654; the sequence is AQRQPSSPQTGT. The 78-residue stretch at 1649 to 1726 folds into the Carrier 1 domain; that stretch reads SPQTGTMGRI…ELKAFLGADQ (78 aa). Serine 1686 is modified (O-(pantetheine 4'-phosphoryl)serine). Residues 1735 to 1765 form a disordered region; it reads SSIGQHTPQTSDKGSGTLASQKTDGDTGPDT. The span at 1736-1756 shows a compositional bias: polar residues; the sequence is SIGQHTPQTSDKGSGTLASQK. Residues 1764–1838 enclose the Carrier 2 domain; it reads DTTLNRVCAI…ALQKALCGSE (75 aa). O-(pantetheine 4'-phosphoryl)serine is present on serine 1798. The segment at 1873–2149 is thioesterase (TE) domain; sequence ASPPHATSIL…MVEMGNLIGD (277 aa). Residue serine 1979 is the For thioesterase activity of the active site.

In terms of biological role, polyketide synthase; part of the Pks2 gene cluster that mediates the formation of infectious structures (appressoria), enabling these fungi to kill insects faster. The product of the Pks2 gene cluster is different from the one of Pks1 and has still not been identified. The chain is Polyketide synthase 2 from Metarhizium anisopliae (strain ARSEF 549).